The following is a 599-amino-acid chain: Elongation factor 4 (599 aa).

Positions 5–187 (SKIRNFSIVA…AIVKRLPAPT (183 aa)) constitute a tr-type G domain. Residues 17–22 (DHGKST) and 134–137 (NKID) contribute to the GTP site.

It belongs to the TRAFAC class translation factor GTPase superfamily. Classic translation factor GTPase family. LepA subfamily.

It localises to the cell inner membrane. The catalysed reaction is GTP + H2O = GDP + phosphate + H(+). Its function is as follows. Required for accurate and efficient protein synthesis under certain stress conditions. May act as a fidelity factor of the translation reaction, by catalyzing a one-codon backward translocation of tRNAs on improperly translocated ribosomes. Back-translocation proceeds from a post-translocation (POST) complex to a pre-translocation (PRE) complex, thus giving elongation factor G a second chance to translocate the tRNAs correctly. Binds to ribosomes in a GTP-dependent manner. This is Elongation factor 4 from Ruegeria sp. (strain TM1040) (Silicibacter sp.).